A 426-amino-acid chain; its full sequence is 5-aminovalerate aminotransferase DavT (426 aa).

Residues 112-113 (GS), tyrosine 139, and 240-243 (DEVQ) each bind pyridoxal 5'-phosphate. At lysine 269 the chain carries N6-(pyridoxal phosphate)lysine. Threonine 298 lines the pyridoxal 5'-phosphate pocket.

Belongs to the class-III pyridoxal-phosphate-dependent aminotransferase family. Pyridoxal 5'-phosphate is required as a cofactor.

It carries out the reaction 5-aminopentanoate + 2-oxoglutarate = 5-oxopentanoate + L-glutamate. Its function is as follows. Catalyzes the conversion of 5-aminovalerate to 5-oxopentanoate. The chain is 5-aminovalerate aminotransferase DavT (davT) from Pseudomonas aeruginosa (strain ATCC 15692 / DSM 22644 / CIP 104116 / JCM 14847 / LMG 12228 / 1C / PRS 101 / PAO1).